A 237-amino-acid chain; its full sequence is Germination-specific N-acetylmuramoyl-L-alanine amidase (237 aa).

Positions 1–27 (MRKKLKWLSFLLGFIILLFLFKYQFSN) are cleaved as a signal peptide. Residues 43 to 226 (IYLDPGHGGP…VASSIYKGIL (184 aa)) form the MurNAc-LAA domain.

It belongs to the N-acetylmuramoyl-L-alanine amidase 3 family.

It is found in the secreted. The enzyme catalyses Hydrolyzes the link between N-acetylmuramoyl residues and L-amino acid residues in certain cell-wall glycopeptides.. Functionally, cleaves the peptide side chain from the N-acetylmuramic acid residues in peptidoglycan. This is a step in the formation of muramic delta-lactam residues in spore cortex. The protein is Germination-specific N-acetylmuramoyl-L-alanine amidase (cwlD) of Bacillus subtilis (strain 168).